Reading from the N-terminus, the 515-residue chain is 2-isopropylmalate synthase (515 aa).

Positions 5-267 constitute a Pyruvate carboxyltransferase domain; it reads VIIFDTTLRD…RTGINHEEIH (263 aa). 4 residues coordinate Mn(2+): aspartate 14, histidine 202, histidine 204, and asparagine 238. The regulatory domain stretch occupies residues 392 to 515; that stretch reads KLNYLSVQSG…EMKQKKIATV (124 aa).

It belongs to the alpha-IPM synthase/homocitrate synthase family. LeuA type 1 subfamily. Homodimer. Requires Mn(2+) as cofactor.

It is found in the cytoplasm. The catalysed reaction is 3-methyl-2-oxobutanoate + acetyl-CoA + H2O = (2S)-2-isopropylmalate + CoA + H(+). It functions in the pathway amino-acid biosynthesis; L-leucine biosynthesis; L-leucine from 3-methyl-2-oxobutanoate: step 1/4. Functionally, catalyzes the condensation of the acetyl group of acetyl-CoA with 3-methyl-2-oxobutanoate (2-ketoisovalerate) to form 3-carboxy-3-hydroxy-4-methylpentanoate (2-isopropylmalate). The protein is 2-isopropylmalate synthase of Vibrio vulnificus (strain CMCP6).